The following is a 364-amino-acid chain: GMP reductase (364 aa).

NADP(+) is bound by residues 26–27 (SR), lysine 78, 132–134 (DVA), and 183–184 (IG). Residues glycine 184, glycine 186, and cysteine 189 each contribute to the K(+) site. The active-site Thioimidate intermediate is the cysteine 189. The active-site Proton donor/acceptor is threonine 191. Position 192 (arginine 192) interacts with K(+). GMP-binding positions include 222 to 224 (DGG), 245 to 246 (GG), 271 to 273 (GMS), and 289 to 293 (RASEG). NADP(+)-binding positions include methionine 272, 288-289 (YR), and 317-320 (SACT).

The protein belongs to the IMPDH/GMPR family. GuaC type 1 subfamily. Homotetramer.

The enzyme catalyses IMP + NH4(+) + NADP(+) = GMP + NADPH + 2 H(+). In terms of biological role, catalyzes the irreversible NADPH-dependent deamination of GMP to IMP. It functions in the conversion of nucleobase, nucleoside and nucleotide derivatives of G to A nucleotides, and in maintaining the intracellular balance of A and G nucleotides. The sequence is that of GMP reductase (gmr-1) from Onchocerca volvulus.